The following is a 113-amino-acid chain: Large ribosomal subunit protein uL22 (113 aa).

It belongs to the universal ribosomal protein uL22 family. In terms of assembly, part of the 50S ribosomal subunit.

This protein binds specifically to 23S rRNA; its binding is stimulated by other ribosomal proteins, e.g. L4, L17, and L20. It is important during the early stages of 50S assembly. It makes multiple contacts with different domains of the 23S rRNA in the assembled 50S subunit and ribosome. Its function is as follows. The globular domain of the protein is located near the polypeptide exit tunnel on the outside of the subunit, while an extended beta-hairpin is found that lines the wall of the exit tunnel in the center of the 70S ribosome. The sequence is that of Large ribosomal subunit protein uL22 from Bacillus subtilis (strain 168).